A 687-amino-acid chain; its full sequence is Probable WRKY transcription factor 2 (687 aa).

The tract at residues 197-276 (YGNYNNRSSS…AGGAPAEDGY (80 aa)) is disordered. Composition is skewed to polar residues over residues 199–208 (NYNNRSSSHQ) and 219–249 (NIESSNLYGIETDNQNGQNKTSDVTTNTSLE). The WRKY 1 DNA-binding region spans 267–331 (AGGAPAEDGY…YKGAHNHLKP (65 aa)). Zn(2+)-binding residues include cysteine 298, cysteine 303, histidine 326, and histidine 328. Disordered stretches follow at residues 324 to 384 (GAHN…STRF) and 416 to 453 (FSNDEDEDDRGTHGSVSLGYDGGGGGGGGEGDESESKR). Polar residues predominate over residues 354–379 (RDSAATWVSCNNTQQQGGSNENNVEE). Positions 435–444 (YDGGGGGGGG) are enriched in gly residues. A DNA-binding region (WRKY 2) is located at residues 481-546 (SDVDILDDGY…YEGKHNHDVP (66 aa)). Residues cysteine 512, cysteine 517, histidine 541, and histidine 543 each contribute to the Zn(2+) site. Residues 537–599 (YEGKHNHDVP…QVTTNNQSPF (63 aa)) are disordered. Gly residues predominate over residues 553–565 (HGGGGDSGNGNSG). A compositionally biased stretch (basic and acidic residues) spans 578 to 589 (HHSEPPRGRFDR). Residues 590–599 (QVTTNNQSPF) show a composition bias toward polar residues.

It belongs to the WRKY group I family. Low expression in senescent leaves. Expressed in both the unfertilized egg cell and the pollen tube.

It localises to the nucleus. Its function is as follows. Transcription factor. Regulates WOX8 and WOX9 expression and basal cell division patterns during early embryogenesis. Interacts specifically with the W box (5'-(T)TGAC[CT]-3'), a frequently occurring elicitor-responsive cis-acting element. Required to repolarize the zygote from a transient symmetric state. The polypeptide is Probable WRKY transcription factor 2 (Arabidopsis thaliana (Mouse-ear cress)).